Consider the following 125-residue polypeptide: Small ribosomal subunit protein uS12 (125 aa).

The tract at residues Met-1–Leu-24 is disordered. Basic residues predominate over residues Arg-9–Ser-19. Residue Asp-89 is modified to 3-methylthioaspartic acid. The disordered stretch occupies residues Ser-101–Ala-125. Residues Ala-113–Ala-125 are compositionally biased toward basic residues.

Belongs to the universal ribosomal protein uS12 family. As to quaternary structure, part of the 30S ribosomal subunit. Contacts proteins S8 and S17. May interact with IF1 in the 30S initiation complex.

Its function is as follows. With S4 and S5 plays an important role in translational accuracy. Functionally, interacts with and stabilizes bases of the 16S rRNA that are involved in tRNA selection in the A site and with the mRNA backbone. Located at the interface of the 30S and 50S subunits, it traverses the body of the 30S subunit contacting proteins on the other side and probably holding the rRNA structure together. The combined cluster of proteins S8, S12 and S17 appears to hold together the shoulder and platform of the 30S subunit. This is Small ribosomal subunit protein uS12 from Nitrosomonas europaea (strain ATCC 19718 / CIP 103999 / KCTC 2705 / NBRC 14298).